The chain runs to 374 residues: DNA replication and repair protein RecF (374 aa).

30-37 (GPNAQGKT) is an ATP binding site.

It belongs to the RecF family.

Its subcellular location is the cytoplasm. Functionally, the RecF protein is involved in DNA metabolism; it is required for DNA replication and normal SOS inducibility. RecF binds preferentially to single-stranded, linear DNA. It also seems to bind ATP. The chain is DNA replication and repair protein RecF from Lactobacillus johnsonii (strain CNCM I-12250 / La1 / NCC 533).